We begin with the raw amino-acid sequence, 552 residues long: Urocanate hydratase (552 aa).

Residues 49 to 50 (GG), Q127, 173 to 175 (GMG), D193, 239 to 240 (NA), 260 to 264 (QTSAH), 270 to 271 (YI), and Y319 contribute to the NAD(+) site. Residue C407 is part of the active site. An NAD(+)-binding site is contributed by G489.

Belongs to the urocanase family. NAD(+) serves as cofactor.

Its subcellular location is the cytoplasm. It catalyses the reaction 4-imidazolone-5-propanoate = trans-urocanate + H2O. Its pathway is amino-acid degradation; L-histidine degradation into L-glutamate; N-formimidoyl-L-glutamate from L-histidine: step 2/3. Catalyzes the conversion of urocanate to 4-imidazolone-5-propionate. This chain is Urocanate hydratase, found in Bacillus thuringiensis (strain Al Hakam).